A 70-amino-acid chain; its full sequence is Small ribosomal subunit protein bS21 (70 aa).

This sequence belongs to the bacterial ribosomal protein bS21 family.

This chain is Small ribosomal subunit protein bS21, found in Helicobacter acinonychis (strain Sheeba).